Here is a 360-residue protein sequence, read N- to C-terminus: 3-dehydroquinate synthase (360 aa).

NAD(+)-binding positions include 71–76, 105–109, 129–130, Lys142, Lys151, and 169–172; these read DGEQYK, GVVGD, TT, and TLNT. Zn(2+) contacts are provided by Glu184, His248, and His265.

It belongs to the sugar phosphate cyclases superfamily. Dehydroquinate synthase family. Co(2+) is required as a cofactor. The cofactor is Zn(2+). It depends on NAD(+) as a cofactor.

The protein resides in the cytoplasm. The enzyme catalyses 7-phospho-2-dehydro-3-deoxy-D-arabino-heptonate = 3-dehydroquinate + phosphate. The protein operates within metabolic intermediate biosynthesis; chorismate biosynthesis; chorismate from D-erythrose 4-phosphate and phosphoenolpyruvate: step 2/7. In terms of biological role, catalyzes the conversion of 3-deoxy-D-arabino-heptulosonate 7-phosphate (DAHP) to dehydroquinate (DHQ). The sequence is that of 3-dehydroquinate synthase from Coxiella burnetii (strain RSA 331 / Henzerling II).